A 345-amino-acid chain; its full sequence is Beta-ketoacyl-[acyl-carrier-protein] synthase III (345 aa).

Catalysis depends on residues C114 and H272. Residues 273 to 277 are ACP-binding; that stretch reads QANQR. N302 is an active-site residue.

Belongs to the thiolase-like superfamily. FabH family. In terms of assembly, homodimer.

It is found in the cytoplasm. The enzyme catalyses malonyl-[ACP] + acetyl-CoA + H(+) = 3-oxobutanoyl-[ACP] + CO2 + CoA. It functions in the pathway lipid metabolism; fatty acid biosynthesis. Its function is as follows. Catalyzes the condensation reaction of fatty acid synthesis by the addition to an acyl acceptor of two carbons from malonyl-ACP. Catalyzes the first condensation reaction which initiates fatty acid synthesis and may therefore play a role in governing the total rate of fatty acid production. Possesses both acetoacetyl-ACP synthase and acetyl transacylase activities. Its substrate specificity determines the biosynthesis of branched-chain and/or straight-chain of fatty acids. The polypeptide is Beta-ketoacyl-[acyl-carrier-protein] synthase III (Rhodopirellula baltica (strain DSM 10527 / NCIMB 13988 / SH1)).